Here is a 119-residue protein sequence, read N- to C-terminus: Autophagy-related protein 8 (119 aa).

The Phosphatidylethanolamine amidated glycine moiety is linked to residue G116. Positions 117–119 are cleaved as a propeptide — removed in mature form; that stretch reads EAL.

It belongs to the ATG8 family. In terms of assembly, conjugation to phosphatidylethanolamine (PE) leads to homodimerization. Interacts with ATG1, ATG3, ATG4, ATG7 and ATG12. In terms of processing, the C-terminal Glu-117, Ala-118 and Leu-119 residues of ATG8 are removed by ATG4 to expose Gly-116 at the C-terminus. This Gly-116 forms then a thioester bond with ATG7 (E1-like activating enzyme) before being transferred to ATG3 (the specific E2 conjugating enzyme), in order to be finally amidated with phosphatidylethanolamine. This lipid modification anchors ATG8 to membranes and can be reversed by ATG4, releasing soluble ATG8.

It is found in the cytoplasmic vesicle. The protein resides in the cvt vesicle membrane. It localises to the autophagosome membrane. Its subcellular location is the vacuole membrane. Its function is as follows. Ubiquitin-like modifier involved in cytoplasm to vacuole transport (Cvt) vesicles and autophagosome formation. With ATG4, mediates the delivery of the vesicles and autophagosomes to the vacuole via the microtubule cytoskeleton. Required for selective autophagic degradation of the nucleus (nucleophagy) as well as for mitophagy which contributes to regulate mitochondrial quantity and quality by eliminating the mitochondria to a basal level to fulfill cellular energy requirements and preventing excess ROS production. Also participates in membrane fusion events that take place in the early secretory pathway. Also involved in endoplasmic reticulum-specific autophagic process and is essential for the survival of cells subjected to severe ER stress. The ATG8-PE conjugate mediates tethering between adjacent membranes and stimulates membrane hemifusion, leading to expansion of the autophagosomal membrane during autophagy. Moreover not only conjugation, but also subsequent ATG8-PE deconjugation is an important step required to facilitate multiple events during macroautophagy, and especially for efficient autophagosome biogenesis, the assembly of ATG9-containing tubulovesicular clusters into phagophores/autophagosomes, and for the disassembly of PAS-associated ATG components. Autophagy is required for conidiation, aerial mycelial growth, and pseudothecia formation, but not for host invasion. This chain is Autophagy-related protein 8, found in Cochliobolus heterostrophus (strain C4 / ATCC 48331 / race T) (Southern corn leaf blight fungus).